Here is a 934-residue protein sequence, read N- to C-terminus: Pesticidal crystal protein Cry1Aa (934 aa).

Belongs to the delta endotoxin family.

In terms of biological role, promotes colloidosmotic lysis by binding to the midgut epithelial cells of many lepidopteran larvae. The sequence is that of Pesticidal crystal protein Cry1Aa (cry1Aa) from Bacillus thuringiensis subsp. sotto.